Consider the following 303-residue polypeptide: Ribosomal protein L11 methyltransferase (303 aa).

The S-adenosyl-L-methionine site is built by T146, G167, D189, and N236.

It belongs to the methyltransferase superfamily. PrmA family.

Its subcellular location is the cytoplasm. It carries out the reaction L-lysyl-[protein] + 3 S-adenosyl-L-methionine = N(6),N(6),N(6)-trimethyl-L-lysyl-[protein] + 3 S-adenosyl-L-homocysteine + 3 H(+). Its function is as follows. Methylates ribosomal protein L11. The polypeptide is Ribosomal protein L11 methyltransferase (Acinetobacter baylyi (strain ATCC 33305 / BD413 / ADP1)).